A 341-amino-acid polypeptide reads, in one-letter code: Cobalt-precorrin-5B C(1)-methyltransferase (341 aa).

This sequence belongs to the CbiD family.

It carries out the reaction Co-precorrin-5B + S-adenosyl-L-methionine = Co-precorrin-6A + S-adenosyl-L-homocysteine. It participates in cofactor biosynthesis; adenosylcobalamin biosynthesis; cob(II)yrinate a,c-diamide from sirohydrochlorin (anaerobic route): step 6/10. Catalyzes the methylation of C-1 in cobalt-precorrin-5B to form cobalt-precorrin-6A. The polypeptide is Cobalt-precorrin-5B C(1)-methyltransferase (Picrophilus torridus (strain ATCC 700027 / DSM 9790 / JCM 10055 / NBRC 100828 / KAW 2/3)).